Consider the following 290-residue polypeptide: Ribosomal RNA small subunit methyltransferase A (290 aa).

S-adenosyl-L-methionine contacts are provided by N27, L29, G54, E75, D100, and N125.

This sequence belongs to the class I-like SAM-binding methyltransferase superfamily. rRNA adenine N(6)-methyltransferase family. RsmA subfamily.

The protein localises to the cytoplasm. The enzyme catalyses adenosine(1518)/adenosine(1519) in 16S rRNA + 4 S-adenosyl-L-methionine = N(6)-dimethyladenosine(1518)/N(6)-dimethyladenosine(1519) in 16S rRNA + 4 S-adenosyl-L-homocysteine + 4 H(+). Functionally, specifically dimethylates two adjacent adenosines (A1518 and A1519) in the loop of a conserved hairpin near the 3'-end of 16S rRNA in the 30S particle. May play a critical role in biogenesis of 30S subunits. In Streptococcus thermophilus (strain CNRZ 1066), this protein is Ribosomal RNA small subunit methyltransferase A.